The sequence spans 163 residues: Small heat shock protein C4 (163 aa).

A sHSP domain is found at 53 to 163; sequence YNNKILSPRT…QSKAKKIKIS (111 aa).

It belongs to the small heat shock protein (HSP20) family.

The protein is Small heat shock protein C4 (hspc4-1) of Rickettsia felis (strain ATCC VR-1525 / URRWXCal2) (Rickettsia azadi).